Reading from the N-terminus, the 419-residue chain is Gamma-glutamyl phosphate reductase (419 aa).

Belongs to the gamma-glutamyl phosphate reductase family.

The protein localises to the cytoplasm. It carries out the reaction L-glutamate 5-semialdehyde + phosphate + NADP(+) = L-glutamyl 5-phosphate + NADPH + H(+). It functions in the pathway amino-acid biosynthesis; L-proline biosynthesis; L-glutamate 5-semialdehyde from L-glutamate: step 2/2. Catalyzes the NADPH-dependent reduction of L-glutamate 5-phosphate into L-glutamate 5-semialdehyde and phosphate. The product spontaneously undergoes cyclization to form 1-pyrroline-5-carboxylate. This is Gamma-glutamyl phosphate reductase from Caldicellulosiruptor saccharolyticus (strain ATCC 43494 / DSM 8903 / Tp8T 6331).